A 353-amino-acid chain; its full sequence is MGERTWPQLLAALLRGDELSTADTAWAMGEIMSGSAGSAQIAGFAIALRAKGETPAEVSGLVEAMLQHAVRVELPEDLRATAVDVVGTGGDLAHTVNISTMASLVVAGAGVRVVKHGNRAASSSCGTADVLEFLGLPLDLGPEGVAACVAEAGIGFCFAARFHPGMRHAGPVRRELGVPTAFNFLGPLTNPARPRAGAVGCFDARMAPVMAAVFAARGDSTLVLRGEDGLDEFTTAAPTRVWAAQNGTVREALLDAADLGVPRATLADLRGGDVACNADAVRRLLAGETGPIRDAVLVNAAAALATQAPLDGDLTEALRTGLSRAAESIDSGAAARTLNRWIEVAHAVRPVLG.

5-phospho-alpha-D-ribose 1-diphosphate-binding positions include Gly87, 90–91 (GD), Thr95, 97–100 (NIST), 115–123 (KHGNRAASS), and Thr127. Residue Gly87 coordinates anthranilate. Ser99 lines the Mg(2+) pocket. Asn118 is an anthranilate binding site. An anthranilate-binding site is contributed by Arg173. Asp231 and Glu232 together coordinate Mg(2+).

The protein belongs to the anthranilate phosphoribosyltransferase family. In terms of assembly, homodimer. It depends on Mg(2+) as a cofactor.

It carries out the reaction N-(5-phospho-beta-D-ribosyl)anthranilate + diphosphate = 5-phospho-alpha-D-ribose 1-diphosphate + anthranilate. It functions in the pathway amino-acid biosynthesis; L-tryptophan biosynthesis; L-tryptophan from chorismate: step 2/5. In terms of biological role, catalyzes the transfer of the phosphoribosyl group of 5-phosphorylribose-1-pyrophosphate (PRPP) to anthranilate to yield N-(5'-phosphoribosyl)-anthranilate (PRA). The chain is Anthranilate phosphoribosyltransferase from Salinispora arenicola (strain CNS-205).